Reading from the N-terminus, the 240-residue chain is Probable transcriptional regulatory protein Adeh_2184 (240 aa).

Belongs to the TACO1 family.

Its subcellular location is the cytoplasm. This Anaeromyxobacter dehalogenans (strain 2CP-C) protein is Probable transcriptional regulatory protein Adeh_2184.